Consider the following 243-residue polypeptide: MAKVEQVLSLEPQHELKFRGPFTDVVTTNLKLGNPTDRNVCFKVKTTAPRRYCVRPNSGVIDAGASLNVSVMLQPFDYDPNEKSKHKFMVQSMFAPPDTSDMEAVWKEAKPEDLMDSKLRCVFELPAENAKPHDVEINKIMPTSASKTEAPVAAKPLTSPLDDAEVKKVMEECRRLQGEVQRLREESRQLKEEDGLRARKALPSNSPMAALAASGKEEGLSARLLALVVLFFIVGVIIGKIAL.

A2 carries the post-translational modification N-acetylalanine. Residues 2–218 (AKVEQVLSLE…AALAASGKEE (217 aa)) are Cytoplasmic-facing. Positions 7–124 (VLSLEPQHEL…MDSKLRCVFE (118 aa)) constitute an MSP domain. At S146 the chain carries Phosphoserine. A Glycyl lysine isopeptide (Lys-Gly) (interchain with G-Cter in SUMO1) cross-link involves residue K147. Phosphoserine is present on S159. A coiled-coil region spans residues 161-196 (LDDAEVKKVMEECRRLQGEVQRLREESRQLKEEDGL). S206 is modified (phosphoserine). A helical; Anchor for type IV membrane protein membrane pass occupies residues 219-239 (GLSARLLALVVLFFIVGVIIG).

The protein belongs to the VAMP-associated protein (VAP) (TC 9.B.17) family. Homodimer, and heterodimer with VAPA. Interacts with VAMP1 and VAMP2. Interacts (via MSP domain) with ZFYVE27. Interacts with RMDN3. Interacts with KIF5A in a ZFYVE27-dependent manner. Interacts (via MSP domain) with STARD3 (via phospho-FFAT motif). Interacts with STARD3NL (via FFAT motif). Interacts with CERT1. Interacts with PLEKHA3 and SACM1L to form a ternary complex. Interacts with VPS13A (via FFAT motif). Interacts with RB1CC1 (via phosphorylated FFAT motif), MIGA2 (via phosphorylated FFAT motif), RMDN3 (via phosphorylated FFAT motif), OSBPL1A (via FFAT motif), KCNB1 (via phosphorylated FFAT motif) and KCNB2 (via phosphorylated FFAT motif). Interacts (via MSP domain) with WDR44; the interactions connect the endoplasmic reticulum (ER) with the endosomal tubule. Ubiquitous.

The protein resides in the endoplasmic reticulum membrane. Its function is as follows. Endoplasmic reticulum (ER)-anchored protein that mediates the formation of contact sites between the ER and endosomes via interaction with FFAT motif-containing proteins such as STARD3 or WDR44. Interacts with STARD3 in a FFAT motif phosphorylation dependent manner. Via interaction with WDR44 participates in neosynthesized protein export. Participates in the endoplasmic reticulum unfolded protein response (UPR) by inducing ERN1/IRE1 activity. Involved in cellular calcium homeostasis regulation. The sequence is that of Vesicle-associated membrane protein-associated protein B from Rattus norvegicus (Rat).